Reading from the N-terminus, the 195-residue chain is Holliday junction branch migration complex subunit RuvA (195 aa).

Residues 1–64 (MIGRIAGLLL…EDAHLLFGFM (64 aa)) form a domain I region. A domain II region spans residues 65-140 (TEPERVLFRQ…KISPAITLPE (76 aa)). The interval 140 to 144 (ETGTA) is flexible linker. The interval 145 to 195 (MASSTDKDILNALSALGYNDREANWAVGQLSEGVTVSDGIMQSLRLLSKAK) is domain III.

It belongs to the RuvA family. Homotetramer. Forms an RuvA(8)-RuvB(12)-Holliday junction (HJ) complex. HJ DNA is sandwiched between 2 RuvA tetramers; dsDNA enters through RuvA and exits via RuvB. An RuvB hexamer assembles on each DNA strand where it exits the tetramer. Each RuvB hexamer is contacted by two RuvA subunits (via domain III) on 2 adjacent RuvB subunits; this complex drives branch migration. In the full resolvosome a probable DNA-RuvA(4)-RuvB(12)-RuvC(2) complex forms which resolves the HJ.

The protein localises to the cytoplasm. The RuvA-RuvB-RuvC complex processes Holliday junction (HJ) DNA during genetic recombination and DNA repair, while the RuvA-RuvB complex plays an important role in the rescue of blocked DNA replication forks via replication fork reversal (RFR). RuvA specifically binds to HJ cruciform DNA, conferring on it an open structure. The RuvB hexamer acts as an ATP-dependent pump, pulling dsDNA into and through the RuvAB complex. HJ branch migration allows RuvC to scan DNA until it finds its consensus sequence, where it cleaves and resolves the cruciform DNA. The polypeptide is Holliday junction branch migration complex subunit RuvA (Nitrosomonas europaea (strain ATCC 19718 / CIP 103999 / KCTC 2705 / NBRC 14298)).